A 695-amino-acid chain; its full sequence is MFLPSRKALAFLACLASHSVALLTTSENSTHFNLANDRFSIALAKSNGHIVDVQLDGQDLLGPVDGNAGKGPYLDCSCIPSGFWTPGSGAHLELINGTDSTGTAYGGLYMSATYAGTNQTLSQWFFLRGEETGLHAFSRVTYFNETTPSLRSLGELRTLFRPSTDLWTHFSTSDGNYGPKPLGSNSGLVVQDATTYIGNVTDDPYVSQYSDYFTKYTLAESWRNHDVHGLFSDGSSSSDGSTFGAWLVHNTVETYYGGPLHSDLVVDGIVYNYLVSGHHGAPTPNLTHGFDRTWGPQFYYFNRGDSETTLADLRADAAKYADPEWNAEFYDSIADHIPNFTPSTGRTTFKGKVSLPKGAKRPIIVLSEDGQDFQLNVFNTESLQYWAEIDKSGSFSIPRVVEGTYRITIYADEIFGWFIQDHVKVLKSQSKDYSFTWKEESAGKEIWRIGIPDKSSGEYLHGYAPDTSKPLQPEQHRIYWGKYDYPADFPEGINFHVGKSDPSQDLNYIHWAFFPSQGNHLRTEPYYDNVNNWTVTFDLTADQLHNTNTATFTVQIAGAKTANGNAKWTPVEGKYSNLPWTVNVNGRYESTWVIPYWRSGSCGVRSAVSCQNIEQKFAFPSKNLQEGKNEFVLSLPFNASSTETALLPDALYVQARVMGSRLDPARPAPNPLVNSNLGFGRDNPIMEFSNNRIIT.

The signal sequence occupies residues 1 to 21 (MFLPSRKALAFLACLASHSVA). N-linked (GlcNAc...) asparagine glycans are attached at residues Asn28, Asn96, Asn118, Asn144, Asn199, Asn285, Asn532, and Asn638.

Belongs to the polysaccharide lyase 4 family.

It localises to the secreted. The enzyme catalyses Endotype eliminative cleavage of L-alpha-rhamnopyranosyl-(1-&gt;4)-alpha-D-galactopyranosyluronic acid bonds of rhamnogalacturonan I domains in ramified hairy regions of pectin leaving L-rhamnopyranose at the reducing end and 4-deoxy-4,5-unsaturated D-galactopyranosyluronic acid at the non-reducing end.. Functionally, pectinolytic enzymes consist of four classes of enzymes: pectin lyase, polygalacturonase, pectin methylesterase and rhamnogalacturonase. Degrades the rhamnogalacturonan I (RG-I) backbone of pectin. This chain is Probable rhamnogalacturonate lyase C (rglC), found in Aspergillus oryzae (strain ATCC 42149 / RIB 40) (Yellow koji mold).